We begin with the raw amino-acid sequence, 185 residues long: Large ribosomal subunit protein bL12c (185 aa).

The transit peptide at 1–47 directs the protein to the chloroplast; sequence MASTALSSAFSLLSLPSSSSPAAAAAAAPRSFAVPSRARPRRAVAVV.

Belongs to the bacterial ribosomal protein bL12 family.

The protein resides in the plastid. It localises to the chloroplast. The chain is Large ribosomal subunit protein bL12c (RPL12-2) from Oryza sativa subsp. japonica (Rice).